We begin with the raw amino-acid sequence, 244 residues long: tRNA pseudouridine synthase A (244 aa).

The active-site Nucleophile is the D52. Position 110 (Y110) interacts with substrate.

It belongs to the tRNA pseudouridine synthase TruA family. In terms of assembly, homodimer.

It catalyses the reaction uridine(38/39/40) in tRNA = pseudouridine(38/39/40) in tRNA. Functionally, formation of pseudouridine at positions 38, 39 and 40 in the anticodon stem and loop of transfer RNAs. The chain is tRNA pseudouridine synthase A from Pelobacter propionicus (strain DSM 2379 / NBRC 103807 / OttBd1).